The sequence spans 407 residues: tRNA (guanine-N(7)-)-methyltransferase non-catalytic subunit wuho (407 aa).

3 WD repeats span residues 83-124, 171-210, and 214-252; these read AIEV…ARLL, GHLS…DIHS, and GHKE…ELLI.

It belongs to the WD repeat TRM82 family. Forms a heterodimer with the catalytic subunit Mettl1. Interacts with mei-P26 and weakly interacts with bgcn; required for the function or formation of the mei-P26-bgcn-bam-sxl complex. Interacts with nanos; may be involved in mei-P26-dependent derepression of the BMP signaling pathway. Interacts with Myc; the interaction may be mediated by mei-P26 and may be involved in the regulation of ribosome biogenesis. As to expression, in testis, it is present at high level in hub cells, a niche for germline stem cells of testis. Ubiquitously expressed in all testicular cells throughout spermatogenesis. Ubiquitously expressed in all germline and somatic cells of the ovary.

The protein localises to the nucleus. It is found in the cytoplasm. Its pathway is tRNA modification; N(7)-methylguanine-tRNA biosynthesis. Required for the Mettl1-dependent formation of N(7)-methylguanine at position 46 (m7G46) in tRNA. In the Mettl1-wuho methyltransferase complex, it is required to stabilize and induce conformational changes of the catalytic subunit. Required for binding of nanos mRNA and repression of translation by the mei-P26-bgcn-bam-sxl complex. May cooperate with mei-P26 and nanos to derepress the BMP signaling pathway. May cooperate with mei-P26 to suppress expression of a subset of microRNAs. May cooperate with mei-P26 to regulate bam expression levels in germline cells during gametogenesis. Required to promote mitosis to meiosis transition during gametogenesis. May regulate germline cell division in part by regulating ribosome biogenesis. The polypeptide is tRNA (guanine-N(7)-)-methyltransferase non-catalytic subunit wuho (Drosophila ananassae (Fruit fly)).